We begin with the raw amino-acid sequence, 2340 residues long: Protein pad-1 (2340 aa).

Disordered regions lie at residues 411–458 and 1910–1959; these read KLIK…EPSI and TRNS…RRDP. Positions 415-432 are enriched in basic and acidic residues; it reads KRPDSKPPRKPGDREGLH. Over residues 437–448 the composition is skewed to polar residues; the sequence is SLHSGVSGNSED. The span at 1922–1934 shows a compositional bias: low complexity; that stretch reads GGSITSGSTSTTT.

It belongs to the DOP1 family.

Essential for cell patterning during gastrulation. May be involved in protein traffic between late Golgi and early endosomes. The chain is Protein pad-1 (pad-1) from Caenorhabditis briggsae.